A 396-amino-acid chain; its full sequence is MSKTIAINAGSSSLKWQLYQMPEETVLAQGIIERIGLKDSISTVKFNGNKEEQVTDIPDHTTAVKILLNDLIHLNIISAYDEITGVGHRIVAGGEYFTDSVLVDEKVIEQVEELSALAPLHNPGAAAGIRAFREILPDITSVCVFDNAFHMTMQKHTYLYPIPQKYYTEHKVRKYGAHGTSHKYVAQEAAKMLGRPLEELKLITAHIGNGVSITANYHGQSVDTSMGFTPLAGPMMGTRSGDIDPAIIPYIIERDPELKDAADAINMLNKKSGLGGVSGISSDMRDIEAGLQEKNPDAVLAYNIFIDRIKKFIGQYFAVLNGADALVFTAGMGENAPLMRQDVINGMSWFGMEIDPEKNVFGYRGDISTPNSKVKVLVISTDEELCIARDVERLKK.

Asn-8 is a binding site for Mg(2+). Lys-15 provides a ligand contact to ATP. Arg-89 contacts substrate. Asp-146 functions as the Proton donor/acceptor in the catalytic mechanism. ATP is bound by residues 206–210 (HIGNG), 283–285 (DMR), and 331–335 (GMGEN). Position 383 (Glu-383) interacts with Mg(2+).

It belongs to the acetokinase family. Homodimer. The cofactor is Mg(2+). Requires Mn(2+) as cofactor.

It is found in the cytoplasm. The catalysed reaction is acetate + ATP = acetyl phosphate + ADP. It functions in the pathway metabolic intermediate biosynthesis; acetyl-CoA biosynthesis; acetyl-CoA from acetate: step 1/2. Its function is as follows. Catalyzes the formation of acetyl phosphate from acetate and ATP. Can also catalyze the reverse reaction. This is Acetate kinase from Streptococcus uberis (strain ATCC BAA-854 / 0140J).